A 769-amino-acid chain; its full sequence is 3-O-beta-D-glucopyranosyl-beta-D-glucuronide phosphorylase (769 aa).

The active-site Proton donor is the D457.

This sequence belongs to the glycosyl hydrolase 94 family. In terms of assembly, homodimer.

Its subcellular location is the cytoplasm. It catalyses the reaction 3-O-beta-D-glucosyl-D-glucuronate + phosphate = aldehydo-D-glucuronate + alpha-D-glucose 1-phosphate. It carries out the reaction a 3-O-beta-D-glucosyl-beta-D-glucuronoside + phosphate = a beta-D-glucuronoside + alpha-D-glucose 1-phosphate. Its function is as follows. Glycoside phosphorylase that catalyzes the reversible phosphorolysis of 3-O-beta-D-glucosyl-D-glucuronate into D-glucuronic acid and alpha-D-glucose 1-phosphate. Cannot phosphorolyze cellobionic acid and laminaribiose. In the reverse direction, using alpha-D-glucose 1-phosphate as a donor substrate, the enzyme acts on D-glucuronate and its artificial derivative p-nitrophenyl-beta-D-glucuronide. The apparent catalytic efficiency towards p-nitrophenyl-beta-D-glucuronide is approximately 5-fold higher than that towards D-glucuronic acid. Is probably involved in the metabolism of oligosaccharides containing the 3-O-beta-D-glucopyranosyl-beta-D-glucuronide structure released from bacterial and plant acidic carbohydrates. The chain is 3-O-beta-D-glucopyranosyl-beta-D-glucuronide phosphorylase from Paenibacillus borealis.